The chain runs to 456 residues: Bifunctional protein GlmU (456 aa).

The tract at residues 1-229 is pyrophosphorylase; sequence MLNSAMSVVI…ISETDGVNNR (229 aa). UDP-N-acetyl-alpha-D-glucosamine contacts are provided by residues 11 to 14, Lys25, Gln76, 81 to 82, 103 to 105, Gly140, Glu154, Asn169, and Asn227; these read LAAG, GT, and YGD. Asp105 is a Mg(2+) binding site. Residue Asn227 coordinates Mg(2+). Residues 230–250 form a linker region; it reads LQLSRLERIYQAEQAEKLLLS. Positions 251–456 are N-acetyltransferase; the sequence is GVMLRDPARF…QGWQRPVKKK (206 aa). UDP-N-acetyl-alpha-D-glucosamine contacts are provided by Arg333 and Lys351. Catalysis depends on His363, which acts as the Proton acceptor. Residues Tyr366 and Asn377 each coordinate UDP-N-acetyl-alpha-D-glucosamine. Acetyl-CoA contacts are provided by residues Ala380, 386-387, Ser405, Ala423, and Arg440; that span reads NY.

The protein in the N-terminal section; belongs to the N-acetylglucosamine-1-phosphate uridyltransferase family. This sequence in the C-terminal section; belongs to the transferase hexapeptide repeat family. Homotrimer. Requires Mg(2+) as cofactor.

The protein resides in the cytoplasm. The enzyme catalyses alpha-D-glucosamine 1-phosphate + acetyl-CoA = N-acetyl-alpha-D-glucosamine 1-phosphate + CoA + H(+). It carries out the reaction N-acetyl-alpha-D-glucosamine 1-phosphate + UTP + H(+) = UDP-N-acetyl-alpha-D-glucosamine + diphosphate. Its pathway is nucleotide-sugar biosynthesis; UDP-N-acetyl-alpha-D-glucosamine biosynthesis; N-acetyl-alpha-D-glucosamine 1-phosphate from alpha-D-glucosamine 6-phosphate (route II): step 2/2. It participates in nucleotide-sugar biosynthesis; UDP-N-acetyl-alpha-D-glucosamine biosynthesis; UDP-N-acetyl-alpha-D-glucosamine from N-acetyl-alpha-D-glucosamine 1-phosphate: step 1/1. It functions in the pathway bacterial outer membrane biogenesis; LPS lipid A biosynthesis. Functionally, catalyzes the last two sequential reactions in the de novo biosynthetic pathway for UDP-N-acetylglucosamine (UDP-GlcNAc). The C-terminal domain catalyzes the transfer of acetyl group from acetyl coenzyme A to glucosamine-1-phosphate (GlcN-1-P) to produce N-acetylglucosamine-1-phosphate (GlcNAc-1-P), which is converted into UDP-GlcNAc by the transfer of uridine 5-monophosphate (from uridine 5-triphosphate), a reaction catalyzed by the N-terminal domain. The chain is Bifunctional protein GlmU from Salmonella paratyphi A (strain ATCC 9150 / SARB42).